The sequence spans 534 residues: Ankyrin repeat and LEM domain-containing protein 1 (534 aa).

4 ANK repeats span residues 4 to 35 (TACL…DPNL), 39 to 71 (DGAA…DPNA), 75 to 104 (EGLT…DPTL), and 108 to 137 (DGLR…PTQP). The LEM domain maps to 279 to 323 (HSSVPPMSDLQLLQALRALGYSPGPVTPFTRGHYLRRLQEAQASR). A GIY-YIG domain is found at 370–485 (KSSFTYLLLD…ALGLQTLTNQ (116 aa)). The Nuclear localization signal signature appears at 498–505 (PPSRRRRL).

In terms of assembly, interacts (via LEM domain) with BANF1; the interaction may favor BANF1 dimerization. Predominantly expressed in bone marrow, spleen, thymus, colon and ovary. Expressed also to a lesser extent in lymph nodes, liver and testis.

The protein resides in the cytoplasm. It is found in the nucleus. Functionally, endonuclease that probably plays a role in the DNA damage response and DNA repair. This is Ankyrin repeat and LEM domain-containing protein 1 from Mus musculus (Mouse).